We begin with the raw amino-acid sequence, 462 residues long: tRNA-2-methylthio-N(6)-dimethylallyladenosine synthase (462 aa).

The 117-residue stretch at 28 to 144 folds into the MTTase N-terminal domain; that stretch reads KKLFVKTYGC…LPKMMEAVNA (117 aa). Positions 37, 73, 107, 181, 185, and 188 each coordinate [4Fe-4S] cluster. The 232-residue stretch at 167-398 folds into the Radical SAM core domain; the sequence is ATRGPTAFLT…QALLTQQQRA (232 aa). In terms of domain architecture, TRAM spans 401–462; the sequence is DAMVGRRVKV…KTNSLTGRLV (62 aa).

It belongs to the methylthiotransferase family. MiaB subfamily. In terms of assembly, monomer. Requires [4Fe-4S] cluster as cofactor.

It is found in the cytoplasm. It carries out the reaction N(6)-dimethylallyladenosine(37) in tRNA + (sulfur carrier)-SH + AH2 + 2 S-adenosyl-L-methionine = 2-methylsulfanyl-N(6)-dimethylallyladenosine(37) in tRNA + (sulfur carrier)-H + 5'-deoxyadenosine + L-methionine + A + S-adenosyl-L-homocysteine + 2 H(+). In terms of biological role, catalyzes the methylthiolation of N6-(dimethylallyl)adenosine (i(6)A), leading to the formation of 2-methylthio-N6-(dimethylallyl)adenosine (ms(2)i(6)A) at position 37 in tRNAs that read codons beginning with uridine. This is tRNA-2-methylthio-N(6)-dimethylallyladenosine synthase from Jannaschia sp. (strain CCS1).